The chain runs to 268 residues: Thymidylate synthase (268 aa).

Arg27 is a dUMP binding site. His57 contacts (6R)-5,10-methylene-5,6,7,8-tetrahydrofolate. 132–133 (RR) is a binding site for dUMP. Cys152 serves as the catalytic Nucleophile. Residues 172-175 (RSAD), Asn183, and 213-215 (HVY) each bind dUMP. Asp175 contacts (6R)-5,10-methylene-5,6,7,8-tetrahydrofolate. Ala267 contacts (6R)-5,10-methylene-5,6,7,8-tetrahydrofolate.

Belongs to the thymidylate synthase family. Bacterial-type ThyA subfamily. As to quaternary structure, homodimer.

The protein localises to the cytoplasm. The enzyme catalyses dUMP + (6R)-5,10-methylene-5,6,7,8-tetrahydrofolate = 7,8-dihydrofolate + dTMP. It functions in the pathway pyrimidine metabolism; dTTP biosynthesis. Catalyzes the reductive methylation of 2'-deoxyuridine-5'-monophosphate (dUMP) to 2'-deoxythymidine-5'-monophosphate (dTMP) while utilizing 5,10-methylenetetrahydrofolate (mTHF) as the methyl donor and reductant in the reaction, yielding dihydrofolate (DHF) as a by-product. This enzymatic reaction provides an intracellular de novo source of dTMP, an essential precursor for DNA biosynthesis. In Kineococcus radiotolerans (strain ATCC BAA-149 / DSM 14245 / SRS30216), this protein is Thymidylate synthase.